Reading from the N-terminus, the 492-residue chain is Stromelysin-3 (492 aa).

A signal peptide spans 1–35 (MARAACLLRAISRVLLLPLPLLLLLLLLLPSPLMA). Residues 36-101 (RARPPESHRH…VLNARNRQKR (66 aa)) constitute a propeptide, activation peptide. Positions 82–89 (LRCGVPDL) match the Cysteine switch motif. Residues Cys-84, His-168, and Asp-170 each contribute to the Zn(2+) site. The Ca(2+) site is built by Asp-175, Gly-176, Gly-178, and Ile-180. The Zn(2+) site is built by His-183, His-196, and His-219. Glu-220 is a catalytic residue. Positions 223 and 229 each coordinate Zn(2+). Hemopexin repeat units follow at residues 295–343 (PDVC…WQGL), 344–386 (PSPV…KLGL), 388–436 (GSPV…WRGV), and 437–484 (PSEI…FFDC). A disulfide bond links Cys-298 and Cys-484.

Belongs to the peptidase M10A family. Ca(2+) serves as cofactor. Requires Zn(2+) as cofactor. In terms of processing, the precursor is cleaved by a furin endopeptidase. As to expression, specifically expressed in the mammary gland during apoptosis.

Its subcellular location is the secreted. The protein resides in the extracellular space. The protein localises to the extracellular matrix. May play an important role in the progression of epithelial malignancies. This is Stromelysin-3 (Mmp11) from Mus musculus (Mouse).